We begin with the raw amino-acid sequence, 131 residues long: Small ribosomal subunit protein uS8 (131 aa).

This sequence belongs to the universal ribosomal protein uS8 family. As to quaternary structure, part of the 30S ribosomal subunit. Contacts proteins S5 and S12.

Its function is as follows. One of the primary rRNA binding proteins, it binds directly to 16S rRNA central domain where it helps coordinate assembly of the platform of the 30S subunit. In Parabacteroides distasonis (strain ATCC 8503 / DSM 20701 / CIP 104284 / JCM 5825 / NCTC 11152), this protein is Small ribosomal subunit protein uS8.